The sequence spans 371 residues: Beta-1,3-galactosyltransferase 4 (371 aa).

The Cytoplasmic portion of the chain corresponds to 1–4 (MPLS). A helical; Signal-anchor for type II membrane protein transmembrane segment spans residues 5–25 (LFRRVLLAVLLLVIIWTLFGP). At 26-371 (SGLGEELLSL…RCRFIAWFSS (346 aa)) the chain is on the lumenal side. Asn143 is a glycosylation site (N-linked (GlcNAc...) asparagine).

This sequence belongs to the glycosyltransferase 31 family. In terms of tissue distribution, expressed in heart, brain, spleen, kidney, lung and testis.

It is found in the golgi apparatus membrane. It carries out the reaction a ganglioside GM2 (d18:1(4E)) + UDP-alpha-D-galactose = a ganglioside GM1 (d18:1(4E)) + UDP + H(+). It catalyses the reaction a ganglioside GM2 + UDP-alpha-D-galactose = a ganglioside GM1 + UDP + H(+). The catalysed reaction is a ganglioside GD2 (d18:1(4E)) + UDP-alpha-D-galactose = a ganglioside GD1b (d18:1(4E)) + UDP + H(+). The enzyme catalyses a ganglioside GA2 (d18:1(4E)) + UDP-alpha-D-galactose = a ganglioside GA1 (d18:1(4E)) + UDP + H(+). It participates in protein modification; protein glycosylation. In terms of biological role, involved in GM1/GD1B/GA1 ganglioside biosynthesis. The polypeptide is Beta-1,3-galactosyltransferase 4 (Mus musculus (Mouse)).